A 439-amino-acid chain; its full sequence is GTPase Der (439 aa).

EngA-type G domains follow at residues 2–168 (ATVL…EEKG) and 181–357 (IKIA…SSYT). GTP is bound by residues 8–15 (GKPNVGKS), 55–59 (DTCGV), 118–121 (NKTE), 187–194 (GRPNVGKS), 234–238 (DTAGL), and 300–303 (NKWD). In terms of domain architecture, KH-like spans 358–439 (TKVPSSALNS…PIFLKFKKSR (82 aa)).

It belongs to the TRAFAC class TrmE-Era-EngA-EngB-Septin-like GTPase superfamily. EngA (Der) GTPase family. In terms of assembly, associates with the 50S ribosomal subunit.

Its function is as follows. GTPase that plays an essential role in the late steps of ribosome biogenesis. The polypeptide is GTPase Der (Thermotoga neapolitana (strain ATCC 49049 / DSM 4359 / NBRC 107923 / NS-E)).